The sequence spans 823 residues: MNVYMKEKTRVFCQNSFDDLDDNIGIVMPILTECDVDEDFTEGIEKVGDTIPILPLRNMVLFPGVALPVIIGRPKSMRLIKEAVHKKSLIGVVCQKEMGTEDPILEDLYTTGVIADIVRVLEMPDGSTTVILQGKKRFELNELTETDPYLSGKITVLEDTKPDKTDREFEALISTIKDLTIKMLGAVAEPPRDLIFSIKNNKNVLYVVNFSCSNIPSGSAEKQQLLLIGDLKERAYRLLFILNREYQLVELKASIQMKTHEDINQQQKEYFLQQQIKTIQEELGGNINELEIKELREKASRKKWPAEVAQVFEKELRKLERLHPQSPDYSVQTQYVQNIVNLPWNEYSKDNFNLSHAQKVLDRDHYGLEKVKERIIEHLAVLKLKGDMKSPIICLYGPPGVGKTSLGRSIAEALRRKYVRVSLGGLHDEAEIRGHRRTYIGAMCGRIIQNIQKAGTSNPVFILDEIDKITNDFKGDPASALLEVLDPEQNNAFHDNYLDIDYDLSKVMFIATANNLNTISQPLLDRMELIEVSGYIMEEKVEIAAKHLVPKQMDVHGLKKGSVKFPKKTLQVIVEAYTRESGVRELDKKIAKIMRKLARKVASDEPIPTSIKPEDLYEYLGAVEYSRDKYQGNDYAGVVTGLAWTAVGGEILFVESSLSKGKGSKLTLTGNLGDVMKESAMLALEYIHAHAAQFNINEELFENWNVHVHVPEGAIPKDGPSAGITMVTSLVSAFTQRKVKKNLAMTGEITLRGKVLPVGGIKEKILAAKRAGIKELILCKENEKDINEIKPEYLKGLVFHYVSDIQQVVDLALLREKVDNPLF.

Residues 51–246 (IPILPLRNMV…RLLFILNREY (196 aa)) form the Lon N-terminal domain. 397 to 404 (GPPGVGKT) provides a ligand contact to ATP. One can recognise a Lon proteolytic domain in the interval 633-815 (NDYAGVVTGL…QQVVDLALLR (183 aa)). Residues Ser721 and Lys764 contribute to the active site.

This sequence belongs to the peptidase S16 family. As to quaternary structure, homohexamer. Organized in a ring with a central cavity.

The protein resides in the cytoplasm. The enzyme catalyses Hydrolysis of proteins in presence of ATP.. Functionally, ATP-dependent serine protease that mediates the selective degradation of mutant and abnormal proteins as well as certain short-lived regulatory proteins. Required for cellular homeostasis and for survival from DNA damage and developmental changes induced by stress. Degrades polypeptides processively to yield small peptide fragments that are 5 to 10 amino acids long. Binds to DNA in a double-stranded, site-specific manner. The polypeptide is Lon protease (Parabacteroides distasonis (strain ATCC 8503 / DSM 20701 / CIP 104284 / JCM 5825 / NCTC 11152)).